The primary structure comprises 266 residues: Glucosamine-6-phosphate deaminase (266 aa).

Catalysis depends on Asp72, which acts as the Proton acceptor; for enolization step. Asp141 acts as the For ring-opening step in catalysis. The active-site Proton acceptor; for ring-opening step is His143. Glu148 functions as the For ring-opening step in the catalytic mechanism.

It belongs to the glucosamine/galactosamine-6-phosphate isomerase family. NagB subfamily. As to quaternary structure, homohexamer.

The catalysed reaction is alpha-D-glucosamine 6-phosphate + H2O = beta-D-fructose 6-phosphate + NH4(+). The protein operates within amino-sugar metabolism; N-acetylneuraminate degradation; D-fructose 6-phosphate from N-acetylneuraminate: step 5/5. Its activity is regulated as follows. Allosterically activated by N-acetylglucosamine 6-phosphate (GlcNAc6P). In terms of biological role, catalyzes the reversible isomerization-deamination of glucosamine 6-phosphate (GlcN6P) to form fructose 6-phosphate (Fru6P) and ammonium ion. In Salmonella arizonae (strain ATCC BAA-731 / CDC346-86 / RSK2980), this protein is Glucosamine-6-phosphate deaminase.